Reading from the N-terminus, the 402-residue chain is Bacteriochlorophyllide c C-7(1)-hydroxylase (402 aa).

One can recognise a Radical SAM core domain in the interval 104–359 (VIGMNQDIIN…IKYQDRFDMP (256 aa)). [4Fe-4S] cluster contacts are provided by Cys120, Cys129, and Cys132.

This sequence belongs to the radical SAM superfamily. [4Fe-4S] cluster is required as a cofactor.

The enzyme catalyses a bacteriochlorophyllide c + 2 S-adenosyl-L-methionine + H2O = a bacteriochlorophyllide e + 2 5'-deoxyadenosine + 2 L-methionine + 2 H(+). The catalysed reaction is a bacteriochlorophyllide d + 2 S-adenosyl-L-methionine + H2O = a bacteriochlorophyllide f + 2 5'-deoxyadenosine + 2 L-methionine + 2 H(+). It participates in porphyrin-containing compound metabolism; bacteriochlorophyll biosynthesis. In terms of biological role, involved in the biosynthesis of bacteriochlorophyll e (BChl e). Catalyzes two consecutive hydroxylation reactions of the C-7 methyl group of bacteriochlorophyllide c (BChlide c) to form a geminal diol intermediate that spontaneously dehydrates to produce the formyl group of bacteriochlorophyllide e (BChlide e). Also able to catalyze the same reaction for bacteriochlorophyllide d (BChlide d) to give rise to bacteriochlorophyllide f (BChlide f). In Chlorobaculum limnaeum, this protein is Bacteriochlorophyllide c C-7(1)-hydroxylase.